Consider the following 31-residue polypeptide: Photosystem II reaction center protein T (31 aa).

A helical membrane pass occupies residues serine 3–phenylalanine 23.

The protein belongs to the PsbT family. In terms of assembly, PSII is composed of 1 copy each of membrane proteins PsbA, PsbB, PsbC, PsbD, PsbE, PsbF, PsbH, PsbI, PsbJ, PsbK, PsbL, PsbM, PsbT, PsbX, PsbY, PsbZ, Psb30/Ycf12, peripheral proteins PsbO, CyanoQ (PsbQ), PsbU, PsbV and a large number of cofactors. It forms dimeric complexes.

The protein resides in the cellular thylakoid membrane. Found at the monomer-monomer interface of the photosystem II (PS II) dimer, plays a role in assembly and dimerization of PSII. PSII is a light-driven water plastoquinone oxidoreductase, using light energy to abstract electrons from H(2)O, generating a proton gradient subsequently used for ATP formation. This is Photosystem II reaction center protein T from Picosynechococcus sp. (strain ATCC 27264 / PCC 7002 / PR-6) (Agmenellum quadruplicatum).